We begin with the raw amino-acid sequence, 214 residues long: External core antigen (214 aa).

Positions 1–19 (MQLFHLCLIISCTCPTVQA) are cleaved as a signal peptide. The interval 25-27 (GWL) is HBEAG. Residues 165–214 (NAPILSTLPETTVVRRRDRGRSPRRRTPSPRRRRSQSPRRRRSQSRESQC) form a disordered region. Residues 178–207 (VRRRDRGRSPRRRTPSPRRRRSQSPRRRRS) are compositionally biased toward basic residues. One copy of the 1; half-length repeat lies at 186–192 (SPRRRTP). Residues 186–208 (SPRRRTPSPRRRRSQSPRRRRSQ) form a 3 X 8 AA repeats of S-P-R-R-R-R-S-Q region. Residues 186 to 214 (SPRRRTPSPRRRRSQSPRRRRSQSRESQC) constitute a propeptide that is removed on maturation. Tandem repeats lie at residues 193–200 (SPRRRRSQ) and 201–208 (SPRRRRSQ).

The protein belongs to the orthohepadnavirus precore antigen family. In terms of assembly, homodimerizes. In terms of processing, phosphorylated. Cleaved by host furin.

The protein resides in the secreted. Its subcellular location is the host nucleus. Functionally, may regulate immune response to the intracellular capsid in acting as a T-cell tolerogen, by having an immunoregulatory effect which prevents destruction of infected cells by cytotoxic T-cells. This immune regulation may predispose to chronicity during perinatal infections and prevent severe liver injury during adult infections. In Homo sapiens (Human), this protein is External core antigen.